The primary structure comprises 501 residues: Glutamyl-tRNA(Gln) amidotransferase subunit A (501 aa).

Active-site charge relay system residues include Lys80 and Ser155. Ser179 (acyl-ester intermediate) is an active-site residue.

This sequence belongs to the amidase family. GatA subfamily. Heterotrimer of A, B and C subunits.

The catalysed reaction is L-glutamyl-tRNA(Gln) + L-glutamine + ATP + H2O = L-glutaminyl-tRNA(Gln) + L-glutamate + ADP + phosphate + H(+). Functionally, allows the formation of correctly charged Gln-tRNA(Gln) through the transamidation of misacylated Glu-tRNA(Gln) in organisms which lack glutaminyl-tRNA synthetase. The reaction takes place in the presence of glutamine and ATP through an activated gamma-phospho-Glu-tRNA(Gln). In Cupriavidus pinatubonensis (strain JMP 134 / LMG 1197) (Cupriavidus necator (strain JMP 134)), this protein is Glutamyl-tRNA(Gln) amidotransferase subunit A.